A 302-amino-acid chain; its full sequence is Oxygen-dependent coproporphyrinogen-III oxidase (302 aa).

Serine 90 lines the substrate pocket. A divalent metal cation is bound by residues histidine 94 and histidine 104. The Proton donor role is filled by histidine 104. 106 to 108 is a substrate binding site; sequence NVR. A divalent metal cation contacts are provided by histidine 143 and histidine 173. The important for dimerization stretch occupies residues 238-273; sequence YVEFNLIYDRGTIFGLQSNGRTESILLSMPPIVKWR.

The protein belongs to the aerobic coproporphyrinogen-III oxidase family. In terms of assembly, homodimer. A divalent metal cation serves as cofactor.

Its subcellular location is the cytoplasm. The catalysed reaction is coproporphyrinogen III + O2 + 2 H(+) = protoporphyrinogen IX + 2 CO2 + 2 H2O. It functions in the pathway porphyrin-containing compound metabolism; protoporphyrin-IX biosynthesis; protoporphyrinogen-IX from coproporphyrinogen-III (O2 route): step 1/1. Its function is as follows. Involved in the heme biosynthesis. Catalyzes the aerobic oxidative decarboxylation of propionate groups of rings A and B of coproporphyrinogen-III to yield the vinyl groups in protoporphyrinogen-IX. The chain is Oxygen-dependent coproporphyrinogen-III oxidase from Methylobacillus flagellatus (strain ATCC 51484 / DSM 6875 / VKM B-1610 / KT).